Here is a 350-residue protein sequence, read N- to C-terminus: MESFNTFVRQYNDQHAEAIAKGELEALAESSSAFIEKASGIKSRFVMNKEGILDPQRMVPYLPERSNDEWSILCEMAVAAAREALQRAGRSAADIDGVIVACSNLQRAYPAIAVEVQAALGIQGYGYDMNVACSSATFGIQAATTAIQTGQARAILMVNPEICTGHLNFRDRDSHFIFGDACTAVIVERADLAVSKHQFDIVSTRLLTQFSNNIRNNFGFLNRADESGIGKRDKLFVQEGRKVFKDVCPMVAELIGEHLAANEIQVAEVKRFWLHQANLNMNLLITRKLLGRDAEAHEAPVILDSYANTSSAGSVIALHKHQDDLPSGAIGVLSSFGAGYSIGSVILRKH.

The active site involves cysteine 133.

Belongs to the thiolase-like superfamily. Beta-ketoacyl-ACP synthases family.

It catalyses the reaction octanoyl-CoA + malonyl-[ACP] + H(+) = 3-oxodecanoyl-[ACP] + CO2 + CoA. Its pathway is lipid metabolism; fatty acid biosynthesis. Catalyzes the condensation of octanoyl-CoA, obtained from exogenously supplied fatty acids via beta-oxidation, with malonyl-[acyl-carrier protein], forming 3-oxodecanoyl-[acyl-carrier protein], an intermediate of the fatty acid elongation cycle that can then be extended to supply all of the cellular fatty acid needs. The enzyme thereby shunts fatty acid degradation intermediates from the beta-oxidation pathway into de novo fatty acid biosynthesis. The chain is Beta-ketodecanoyl-[acyl-carrier-protein] synthase from Pseudomonas aeruginosa (strain ATCC 15692 / DSM 22644 / CIP 104116 / JCM 14847 / LMG 12228 / 1C / PRS 101 / PAO1).